Reading from the N-terminus, the 246-residue chain is Small ribosomal subunit protein uS3 (246 aa).

A KH type-2 domain is found at 19–98 (IDEWLAQNFY…NPMLDARVQA (80 aa)). The tract at residues 218–246 (LQEETASTLREHMEAARPGEEHEEDREES) is disordered. The segment covering 226–237 (LREHMEAARPGE) has biased composition (basic and acidic residues).

Belongs to the universal ribosomal protein uS3 family. As to quaternary structure, part of the 30S ribosomal subunit.

Functionally, binds the lower part of the 30S subunit head. The protein is Small ribosomal subunit protein uS3 of Aeropyrum pernix (strain ATCC 700893 / DSM 11879 / JCM 9820 / NBRC 100138 / K1).